Here is a 297-residue protein sequence, read N- to C-terminus: Protoheme IX farnesyltransferase (297 aa).

Transmembrane regions (helical) follow at residues 15–35, 39–59, 91–111, 112–132, 139–159, 166–186, 220–240, and 265–285; these read VVAL…PAPY, GLLV…AAVF, VWGV…VNII, TVVL…LYLK, IVIG…AVSG, ACLL…ALAI, LLLV…YLVI, and AWST…ALLF.

This sequence belongs to the UbiA prenyltransferase family. Protoheme IX farnesyltransferase subfamily.

The protein resides in the cell inner membrane. It carries out the reaction heme b + (2E,6E)-farnesyl diphosphate + H2O = Fe(II)-heme o + diphosphate. The protein operates within porphyrin-containing compound metabolism; heme O biosynthesis; heme O from protoheme: step 1/1. Its function is as follows. Converts heme B (protoheme IX) to heme O by substitution of the vinyl group on carbon 2 of heme B porphyrin ring with a hydroxyethyl farnesyl side group. This chain is Protoheme IX farnesyltransferase, found in Vesicomyosocius okutanii subsp. Calyptogena okutanii (strain HA).